The chain runs to 61 residues: Photosystem II reaction center X protein (61 aa).

The helical transmembrane segment at 26–46 (IGSFIAAALLIVVPATAFLIF) threads the bilayer.

The protein belongs to the PsbX family. Type 2 subfamily. PSII consists of a core antenna complex that captures photons, and an electron transfer chain that converts photonic excitation into a charge separation. PSII forms dimeric complexes.

Its subcellular location is the cellular thylakoid membrane. Functionally, involved in the binding and/or turnover of quinones at the Q(B) site of Photosystem II. The chain is Photosystem II reaction center X protein from Prochlorococcus marinus (strain AS9601).